A 372-amino-acid polypeptide reads, in one-letter code: MGVKGLNQLIKEHSPSAYKEFQLKNLFGRKVAIDASMCLYQFLIAVRQSDGQQLTNEDGETTSHLSGMFYRTIKMVENNIKPVYVFDGKPPVLKGGELEKRLLRREEAQKQKTALGDEGTVEEVLKFEKRLVRVTREQNEEAKKLLELMGIPCVDAPCEAEAQCAELARGGKVYAAASEDMDTLCYEPPFLLRHLTFSEARKMPIDQIEYKDAIAGLDMTKEQFIDLCILLGCDYCESIKGIGQATAFKLIKEHGSLDNIVEWIKNNKTKYTLPENWPYDEARQLFMNPEVTNANEISLKWKEPDVDGLIEFMVRQKGFSEDRIRSGAEKLKKGLKGGVQGRLDGFFKVVKNDDKKRKADPKETKSSKKKRR.

The tract at residues 1 to 105 (MGVKGLNQLI…GELEKRLLRR (105 aa)) is N-domain. Asp34 contacts Mg(2+). Residues Arg47 and Arg71 each coordinate DNA. The Mg(2+) site is built by Asp87, Glu159, Glu161, Asp180, and Asp182. Residues 123–254 (EVLKFEKRLV…ATAFKLIKEH (132 aa)) are I-domain. Glu159 contributes to the DNA binding site. The DNA site is built by Gly232 and Asp234. Asp234 contacts Mg(2+). The interval 339–347 (VQGRLDGFF) is interaction with PCNA.

Belongs to the XPG/RAD2 endonuclease family. FEN1 subfamily. Interacts with PCNA. Three molecules of RAD27 bind to one PCNA trimer with each molecule binding to one PCNA monomer. PCNA stimulates the nuclease activity without altering cleavage specificity. Mg(2+) serves as cofactor. Phosphorylated. Phosphorylation upon DNA damage induces relocalization to the nuclear plasma.

Its subcellular location is the nucleus. The protein localises to the nucleolus. It is found in the nucleoplasm. The protein resides in the mitochondrion. Its function is as follows. Structure-specific nuclease with 5'-flap endonuclease and 5'-3' exonuclease activities involved in DNA replication and repair. During DNA replication, cleaves the 5'-overhanging flap structure that is generated by displacement synthesis when DNA polymerase encounters the 5'-end of a downstream Okazaki fragment. It enters the flap from the 5'-end and then tracks to cleave the flap base, leaving a nick for ligation. Also involved in the long patch base excision repair (LP-BER) pathway, by cleaving within the apurinic/apyrimidinic (AP) site-terminated flap. Acts as a genome stabilization factor that prevents flaps from equilibrating into structures that lead to duplications and deletions. Also possesses 5'-3' exonuclease activity on nicked or gapped double-stranded DNA, and exhibits RNase H activity. Also involved in replication and repair of rDNA and in repairing mitochondrial DNA. The chain is Flap endonuclease 1 from Candida dubliniensis (strain CD36 / ATCC MYA-646 / CBS 7987 / NCPF 3949 / NRRL Y-17841) (Yeast).